We begin with the raw amino-acid sequence, 474 residues long: JmjC domain-containing protein F (474 aa).

A disordered region spans residues 247–269; it reads KTKKQQQQQQTTTTTANNDNDNS. The segment covering 251–261 has biased composition (low complexity); it reads QQQQQQTTTTT. Residues 305–474 enclose the JmjC domain; it reads AYLAQHGLIE…LSLSFWFIKK (170 aa).

The polypeptide is JmjC domain-containing protein F (jcdF) (Dictyostelium discoideum (Social amoeba)).